Consider the following 485-residue polypeptide: Sulfate adenylyltransferase subunit 1 (485 aa).

Residues 30–243 (KGLLRFLTCG…ELLETIDTQR (214 aa)) form the tr-type G domain. Residues 39-46 (GSVDDGKS) form a G1 region. 39–46 (GSVDDGKS) contacts GTP. Residues 97–101 (GITID) are G2. The G3 stretch occupies residues 118-121 (DTPG). Residues 118-122 (DTPGH) and 173-176 (NKMD) contribute to the GTP site. Residues 173–176 (NKMD) are G4. The G5 stretch occupies residues 210–212 (SAL).

It belongs to the TRAFAC class translation factor GTPase superfamily. Classic translation factor GTPase family. CysN/NodQ subfamily. As to quaternary structure, heterodimer composed of CysD, the smaller subunit, and CysN.

The catalysed reaction is sulfate + ATP + H(+) = adenosine 5'-phosphosulfate + diphosphate. It functions in the pathway sulfur metabolism; hydrogen sulfide biosynthesis; sulfite from sulfate: step 1/3. Functionally, with CysD forms the ATP sulfurylase (ATPS) that catalyzes the adenylation of sulfate producing adenosine 5'-phosphosulfate (APS) and diphosphate, the first enzymatic step in sulfur assimilation pathway. APS synthesis involves the formation of a high-energy phosphoric-sulfuric acid anhydride bond driven by GTP hydrolysis by CysN coupled to ATP hydrolysis by CysD. The polypeptide is Sulfate adenylyltransferase subunit 1 (Shewanella oneidensis (strain ATCC 700550 / JCM 31522 / CIP 106686 / LMG 19005 / NCIMB 14063 / MR-1)).